The sequence spans 126 residues: Follitropin subunit beta (126 aa).

The N-terminal stretch at 1–19 (MKLIQLCILFWCWRAICCQ) is a signal peptide. Disulfide bonds link Cys-21-Cys-69, Cys-35-Cys-84, Cys-38-Cys-122, Cys-46-Cys-100, Cys-50-Cys-102, and Cys-105-Cys-112. Residues Asn-25 and Asn-42 are each glycosylated (N-linked (GlcNAc...) asparagine).

The protein belongs to the glycoprotein hormones subunit beta family. As to quaternary structure, heterodimer. The active follitropin is a heterodimer composed of an alpha chain/CGA shared with other hormones and a unique beta chain/FSHB shown here.

The protein localises to the secreted. Its function is as follows. Together with the alpha chain CGA constitutes follitropin, the follicle-stimulating hormone, and provides its biological specificity to the hormone heterodimer. Binds FSHR, a G protein-coupled receptor, on target cells to activate downstream signaling pathways. Follitropin is involved in follicle development and spermatogenesis in reproductive organs. This Phodopus sungorus (Striped hairy-footed hamster) protein is Follitropin subunit beta (FSHB).